We begin with the raw amino-acid sequence, 2564 residues long: Histone-lysine N-methyltransferase SETD2 (2564 aa).

A compositionally biased stretch (pro residues) spans M1–K11. Residues M1 to A30 are disordered. Residues D17 to A30 show a composition bias toward basic and acidic residues. S131 carries the phosphoserine modification. Disordered stretches follow at residues S180–P211, N272–K561, and P607–T626. The segment covering P187–A197 has biased composition (pro residues). Over residues Q198–P207 the composition is skewed to low complexity. Residues S278 to E290 show a composition bias toward basic and acidic residues. S321, S323, and S344 each carry phosphoserine. Basic and acidic residues-rich tracts occupy residues R335–R400, R421–R432, P439–K467, and S479–K528. K359 is covalently cross-linked (Glycyl lysine isopeptide (Lys-Gly) (interchain with G-Cter in SUMO2)). S422 bears the Phosphoserine mark. Residues S532, S614, and S624 each carry the phosphoserine modification. Polar residues predominate over residues A616–P625. Residue T626 is modified to Phosphothreonine. K637 participates in a covalent cross-link: Glycyl lysine isopeptide (Lys-Gly) (interchain with G-Cter in SUMO2). Residues S698, S708, S744, and S754 each carry the phosphoserine modification. K776 is covalently cross-linked (Glycyl lysine isopeptide (Lys-Gly) (interchain with G-Cter in SUMO2)). Disordered regions lie at residues E964 to D995, E1036 to W1101, L1133 to T1233, Q1264 to Q1352, and L1393 to A1443. Over residues P971 to D994 the composition is skewed to basic and acidic residues. Acidic residues predominate over residues S1045–D1058. Over residues S1084–R1095 the composition is skewed to low complexity. Position 1098 is a phosphoserine (S1098). The span at H1162–T1171 shows a compositional bias: polar residues. Basic and acidic residues predominate over residues S1172–K1191. The segment covering K1215 to R1225 has biased composition (polar residues). A Phosphoserine modification is found at S1228. Residues E1265–S1276 are compositionally biased toward polar residues. The span at L1393–P1403 shows a compositional bias: basic and acidic residues. Residues S1413, S1415, and S1417 each carry the phosphoserine modification. The segment at D1418–S1714 is interaction with TUBA1A. Residues L1421–V1431 show a composition bias toward basic and acidic residues. Residues I1494–Q1548 form the AWS domain. Zn(2+) is bound by residues C1499, C1501, C1516, C1520, C1529, C1533, and C1539. The 118-residue stretch at A1550–Q1667 folds into the SET domain. S-adenosyl-L-methionine contacts are provided by residues K1560–W1562, H1603–Y1605, and N1628–H1629. Residue C1631 participates in Zn(2+) binding. The region spanning E1674–G1690 is the Post-SET domain. Q1676 serves as a coordination point for S-adenosyl-L-methionine. C1678 is a Zn(2+) binding site. F1679 contributes to the S-adenosyl-L-methionine binding site. The Zn(2+) site is built by C1680 and C1685. S1696, S1844, and S1845 each carry phosphoserine. Residues K1831–T1872 form a disordered region. Residues S1844 to E1867 are compositionally biased toward polar residues. A phosphothreonine mark is found at T1853 and T1872. S1888 carries the post-translational modification Phosphoserine. The interval E1921–Q2142 is disordered. A compositionally biased stretch (low complexity) spans Q1924–E1935. Phosphoserine is present on S1952. A compositionally biased stretch (basic and acidic residues) spans I1960–E1972. Over residues P1973–V1990 the composition is skewed to acidic residues. Residues S1980, S1988, and S1995 each carry the phosphoserine modification. Basic and acidic residues-rich tracts occupy residues E1991–D2004, D2014–G2046, and R2059–K2072. A phosphoserine mark is found at S2080 and S2082. Basic and acidic residues-rich tracts occupy residues R2090–D2100 and K2111–Q2135. Positions S2117–M2146 form a coiled coil. A low charge region region spans residues Q2137–P2366. Residues I2389–W2422 enclose the WW domain. The segment at L2439–E2465 is disordered. An interaction with POLR2A region spans residues T2457–E2564.

Belongs to the class V-like SAM-binding methyltransferase superfamily. Histone-lysine methyltransferase family. SET2 subfamily. Specifically interacts with hyperphosphorylated C-terminal domain (CTD) of RNA polymerase II large subunit (POLR2A): binds to CTD heptad repeats doubly phosphorylated on 'Ser-2' and 'Ser-5' of each heptad. Interacts with HTT. Interacts with IWS1. Interacts with p53/TP53; leading to regulate p53/TP53 target genes. Component of a complex with HNRNPL. Interacts with TUBA1A; the interaction is independent on alpha-tubulin acetylation on 'Lys-40'. Interacts with STAT1. May be automethylated. Ubiquitously expressed.

It is found in the nucleus. Its subcellular location is the chromosome. The enzyme catalyses L-lysyl(36)-[histone H3] + 3 S-adenosyl-L-methionine = N(6),N(6),N(6)-trimethyl-L-lysyl(36)-[histone H3] + 3 S-adenosyl-L-homocysteine + 3 H(+). It catalyses the reaction L-lysyl-[protein] + S-adenosyl-L-methionine = N(6)-methyl-L-lysyl-[protein] + S-adenosyl-L-homocysteine + H(+). It carries out the reaction L-lysyl-[protein] + 3 S-adenosyl-L-methionine = N(6),N(6),N(6)-trimethyl-L-lysyl-[protein] + 3 S-adenosyl-L-homocysteine + 3 H(+). With respect to regulation, specifically inhibited by sinefungin derivatives. N-propyl sinefungin (Pr-SNF) interacts preferentially with SETD2. In terms of biological role, histone methyltransferase that specifically trimethylates 'Lys-36' of histone H3 (H3K36me3) using dimethylated 'Lys-36' (H3K36me2) as substrate. It is capable of trimethylating unmethylated H3K36 (H3K36me0) in vitro. Represents the main enzyme generating H3K36me3, a specific tag for epigenetic transcriptional activation. Plays a role in chromatin structure modulation during elongation by coordinating recruitment of the FACT complex and by interacting with hyperphosphorylated POLR2A. Acts as a key regulator of DNA mismatch repair in G1 and early S phase by generating H3K36me3, a mark required to recruit MSH6 subunit of the MutS alpha complex: early recruitment of the MutS alpha complex to chromatin to be replicated allows a quick identification of mismatch DNA to initiate the mismatch repair reaction. Required for DNA double-strand break repair in response to DNA damage: acts by mediating formation of H3K36me3, promoting recruitment of RAD51 and DNA repair via homologous recombination (HR). Acts as a tumor suppressor. H3K36me3 also plays an essential role in the maintenance of a heterochromatic state, by recruiting DNA methyltransferase DNMT3A. H3K36me3 is also enhanced in intron-containing genes, suggesting that SETD2 recruitment is enhanced by splicing and that splicing is coupled to recruitment of elongating RNA polymerase. Required during angiogenesis. Required for endoderm development by promoting embryonic stem cell differentiation toward endoderm: acts by mediating formation of H3K36me3 in distal promoter regions of FGFR3, leading to regulate transcription initiation of FGFR3. In addition to histones, also mediates methylation of other proteins, such as tubulins and STAT1. Trimethylates 'Lys-40' of alpha-tubulins such as TUBA1B (alpha-TubK40me3); alpha-TubK40me3 is required for normal mitosis and cytokinesis and may be a specific tag in cytoskeletal remodeling. Involved in interferon-alpha-induced antiviral defense by mediating both monomethylation of STAT1 at 'Lys-525' and catalyzing H3K36me3 on promoters of some interferon-stimulated genes (ISGs) to activate gene transcription. Functionally, (Microbial infection) Recruited to the promoters of adenovirus 12 E1A gene in case of infection, possibly leading to regulate its expression. The chain is Histone-lysine N-methyltransferase SETD2 (SETD2) from Homo sapiens (Human).